The sequence spans 431 residues: Maintenance of mitochondrial morphology protein 1 (431 aa).

The Lumenal portion of the chain corresponds to 1 to 103; that stretch reads MVSALEVKSI…QLISWSFAQG (103 aa). Residues 104–124 traverse the membrane as a helical segment; the sequence is LIIGQLSVVIFLIFFVKFFIF. Over 125-431 the chain is Cytoplasmic; that stretch reads TDASSKMDNP…EDESSKTPHS (307 aa). The SMP-LTD domain maps to 192-404; that stretch reads SAESLDWFNV…EPRFQSVKLP (213 aa). The disordered stretch occupies residues 412–431; it reads NTREEVIHKTEDESSKTPHS.

The protein belongs to the MMM1 family. As to quaternary structure, homodimer. Component of the ER-mitochondria encounter structure (ERMES) or MDM complex, composed of MMM1, MDM10, MDM12 and MDM34. An MMM1 homodimer associates with one molecule of MDM12 on each side in a pairwise head-to-tail manner, and the SMP-LTD domains of MMM1 and MDM12 generate a continuous hydrophobic tunnel for phospholipid trafficking.

The protein localises to the endoplasmic reticulum membrane. Component of the ERMES/MDM complex, which serves as a molecular tether to connect the endoplasmic reticulum (ER) and mitochondria. Components of this complex are involved in the control of mitochondrial shape and protein biogenesis, and function in nonvesicular lipid trafficking between the ER and mitochondria. The MDM12-MMM1 subcomplex functions in the major beta-barrel assembly pathway that is responsible for biogenesis of all outer membrane beta-barrel proteins, and acts in a late step after the SAM complex. The MDM10-MDM12-MMM1 subcomplex further acts in the TOM40-specific pathway after the action of the MDM12-MMM1 complex. Essential for establishing and maintaining the structure of mitochondria and maintenance of mtDNA nucleoids. The sequence is that of Maintenance of mitochondrial morphology protein 1 from Candida glabrata (strain ATCC 2001 / BCRC 20586 / JCM 3761 / NBRC 0622 / NRRL Y-65 / CBS 138) (Yeast).